Here is a 1544-residue protein sequence, read N- to C-terminus: MADELERVRISAAELRAQASSFNIHGDDVKDLREEGKKQRQRDSKRPDLQLYKPGVGHPNRRMDSVEGAGSDTLIQPDGFGNDPKMSDESPTSPGCSYMPGTGNEDYLNDHSKPETNHKTDGHIGGDKHKLVDENAVKIIERAGTPKSPKQSRKMRKPDRQIYQPGGRRSQGNKEVGASKELDRDRSREEEVDGKSIETPLKCEKEEKRKNRRGKNDRKKQASVETPSANKTENAVENISNKVSNLHLETVESKDRDRQDDTNQIKHSEEGRKIQTGGANRGMGEDKKKERGNGKSRPGKEKGNNQVFDKKEEGEAGGKASEAPHLEGRKQRNFGAKEASRDQNLNHEKQQGNRPKEKGKPSERTDSKRVNAASKRYSQSDIRRPRNRTYSTSSASSGTSMDGLAEAERLKAEGQQFSARTLERATGQREFVRGGQTRSRRRTARTLSSTDSLEENEVWEREGRRSRAAEEAKSSTRKEGGILRVSLDKREEQASRKSTRGRGRGILVLPAHTDLTQTPDPAPPLGGMRGGMGLGRGRGGRGGGTRRLWDPNNPDKKPALVSSQQSQHASQHQALYLQQGGCGPLHFLDTDDETVGSPPVRQGEFFQNQQAAAMAYYKFQNSDNPYCYPVSANSPNTPPRYPYPYQIPYQIPGSNGMYPASAMTSFYGPYGQGGPGYPSPTVSALTPEEAEVQTRGELGKFLRLADSQELQLSNLLSRERLSQEGLERMAQLRAELLTIYERVILTDIEFSDSQNVDQTLWKNVFYQVIERFRQLLKDQNSDTAPQIKTMLMTILEEGAVFFDSLLQKLQSVFQFKLQDYMDCMAIRARPLRKTVKYALISAQRCMICQGDIARYREQASESANYGKARSWYLKAQQIAPKNGRPYNQLALLAVYTKRKLDAVYYYMRSLAASNPILTAKESLMSLFEEAKRKADQVERRLKQDSDGSAHGPKGHTGGRRGEDAARVEIWIRPSEVSGTSRPTGSESGKDSEQDGELGALSASDLNKRFILSFLHAHGKLFTKVGMESFPAVANRVLLEFRALLQHSPSPLGSTRMLQIITINMFTIYNAQIRAKGQGETRSALEEQAISLGLAMFGLLVQRCTELLKETPTEPIPAEELGEFDEMDDEEGMVRVSVFPHDLRELLPSMKVWSDWMLGHPEKWNPPPCSMQGSPDVWQCLADLCNSFSRVYHGEVLLYKADADGEGDEELRVLQLEEDKMLSGFVPLLAAPQDACYTDQGTDAAIAADCKRVTVLKYFLEALCGQEEPLLAFKGGKYISMAAPLTPSINTENKAQEQEDDVIVEESSLSASEGEIDGEMEGDGSEDDIRELRARRHALAHKLAQQQKRRDKIQAVLQTGGQLEIEVRPFYLVPDTNGFIDHLEGLRKLLACGTYILVVPLIVITELDGLAKGQDSREGVGNGAHARQVQDRARAAVMFLEKAFESRDPSIRALTSRGNTLESIAFRSEDTSGQKGNNDDVILSCCLHYCQDKAKDFMPAERNGPVRLRREVVLLTDDRNLRVKALTRNVPVRDIPAFLIWAKVG.

Composition is skewed to basic and acidic residues over residues 25 to 48 (HGDDVKDLREEGKKQRQRDSKRPD), 108 to 141 (LNDHSKPETNHKTDGHIGGDKHKLVDENAVKIIE), and 177 to 209 (GASKELDRDRSREEEVDGKSIETPLKCEKEEKR). 4 disordered regions span residues 25 to 503 (HGDD…RGRG), 536 to 573 (RGRGGRGGGTRRLWDPNNPDKKPALVSSQQSQHASQHQ), 936 to 964 (QVERRLKQDSDGSAHGPKGHTGGRRGEDA), and 976 to 996 (VSGTSRPTGSESGKDSEQDGE). Polar residues predominate over residues 223-244 (SVETPSANKTENAVENISNKVS). Composition is skewed to basic and acidic residues over residues 249 to 273 (ETVESKDRDRQDDTNQIKHSEEGRK), 283 to 330 (MGED…EGRK), and 338 to 369 (EASRDQNLNHEKQQGNRPKEKGKPSERTDSKR). Low complexity predominate over residues 389-400 (TYSTSSASSGTS). 2 stretches are compositionally biased toward basic and acidic residues: residues 421–432 (TLERATGQREFV) and 458–495 (VWEREGRRSRAAEEAKSSTRKEGGILRVSLDKREEQAS). Residues 536 to 545 (RGRGGRGGGT) show a composition bias toward gly residues. Positions 547–558 (RLWDPNNPDKKP) are enriched in basic and acidic residues. A compositionally biased stretch (low complexity) spans 562 to 573 (SSQQSQHASQHQ). The segment covering 936–947 (QVERRLKQDSDG) has biased composition (basic and acidic residues). Residues 976–986 (VSGTSRPTGSE) show a composition bias toward polar residues. Positions 1369–1522 (FYLVPDTNGF…LLTDDRNLRV (154 aa)) constitute a PINc domain.

In terms of assembly, may form homooligomers. Associated component of the telomerase holoenzyme complex. Requires Mn(2+) as cofactor.

The protein resides in the nucleus. Its subcellular location is the nucleolus. It localises to the chromosome. It is found in the telomere. The protein localises to the cytoplasm. The protein resides in the cytosol. Component of the telomerase ribonucleoprotein (RNP) complex that is essential for the replication of chromosome termini. Required for normal embryonic development. In terms of biological role, plays a role in nonsense-mediated mRNA decay. The sequence is that of Telomerase-binding protein EST1A (smg6) from Danio rerio (Zebrafish).